A 177-amino-acid chain; its full sequence is MLRRLVQQWSVLVFLLSYSVPSRGRSVEGLGRRLKRAVSEHQLLHDKGKSIQDLRRRFFLHHLIAEIHTAEIRATSEVSPNSKPAPNTKNHPVRFGSDDEGRYLTQETNKVETYKEQPLKTPGKKKKGKPGKRREQEKKKRRTRSAWPGTTGSGLLEDPQPHTSPTSTSLEPSSRTH.

The first 24 residues, 1 to 24 (MLRRLVQQWSVLVFLLSYSVPSRG), serve as a signal peptide directing secretion. The propeptide occupies 25–34 (RSVEGLGRRL). An important for receptor binding region spans residues 57–68 (RFFLHHLIAEIH). Residues 74–177 (ATSEVSPNSK…TSLEPSSRTH (104 aa)) form a disordered region. Residues 76–90 (SEVSPNSKPAPNTKN) are compositionally biased toward polar residues. Residues 108–129 (TNKVETYKEQPLKTPGKKKKGK) carry the Nuclear localization signal motif. The segment covering 109 to 118 (NKVETYKEQP) has biased composition (basic and acidic residues). The span at 122-132 (PGKKKKGKPGK) shows a compositional bias: basic residues. A compositionally biased stretch (low complexity) spans 161-177 (PHTSPTSTSLEPSSRTH).

The protein belongs to the parathyroid hormone family. PTHrP interacts with PTH1R (via N-terminal extracellular domain). There are several secretory forms, including osteostatin, arising from endoproteolytic cleavage of the initial translation product. Each of these secretory forms is believed to have one or more of its own receptors that mediates the normal paracrine, autocrine and endocrine actions.

It localises to the secreted. The protein resides in the cytoplasm. It is found in the nucleus. Its function is as follows. Neuroendocrine peptide which is a critical regulator of cellular and organ growth, development, migration, differentiation and survival and of epithelial calcium ion transport. Acts by binding to its receptor, PTH1R, activating G protein-coupled receptor signaling. Regulates endochondral bone development and epithelial-mesenchymal interactions during the formation of the mammary glands and teeth. Required for skeletal homeostasis. Promotes mammary mesenchyme differentiation and bud outgrowth by modulating mesenchymal cell responsiveness to BMPs. Up-regulates BMPR1A expression in the mammary mesenchyme and this increases the sensitivity of these cells to BMPs and allows them to respond to BMP4 in a paracrine and/or autocrine fashion. BMP4 signaling in the mesenchyme, in turn, triggers epithelial outgrowth and augments MSX2 expression, which causes the mammary mesenchyme to inhibit hair follicle formation within the nipple sheath. Functionally, potent inhibitor of osteoclastic bone resorption. The chain is Parathyroid hormone-related protein (Pthlh) from Rattus norvegicus (Rat).